A 352-amino-acid polypeptide reads, in one-letter code: MTLLTEALSKICPVDAELMAQAQARLDNKTKPIGSLGRLEEFARRMVAITGSVAPDTKKKVVFTFAGDHGVTDEGVSAFPREVTPQMVYNFLRGGAGINVLARHVGAQVRVVDIGVDHDFGDTPGLIVRKVARGTRNFARGPAMTREEAVAALEVGIDLANEAKREGIALVGTGEMGIGNTTPSAAIIAAFSGLPVPAVTHRGTGIGDEALANKVRVIEAGLALNQPDPKDPIDVLAKVGGLEIAGIAGLILGCAANRLPVVVDGFISTAGALVACELNPHVRDYLFAAHQSVEVGHRVMLDRIGAAPILDLQLRLGEGTGGALAMGLIEAGVRILTEMATFEEAGVAEGDY.

Glu318 functions as the Proton acceptor in the catalytic mechanism.

This sequence belongs to the CobT family.

It catalyses the reaction 5,6-dimethylbenzimidazole + nicotinate beta-D-ribonucleotide = alpha-ribazole 5'-phosphate + nicotinate + H(+). It functions in the pathway nucleoside biosynthesis; alpha-ribazole biosynthesis; alpha-ribazole from 5,6-dimethylbenzimidazole: step 1/2. In terms of biological role, catalyzes the synthesis of alpha-ribazole-5'-phosphate from nicotinate mononucleotide (NAMN) and 5,6-dimethylbenzimidazole (DMB). In Geobacter sulfurreducens (strain ATCC 51573 / DSM 12127 / PCA), this protein is Nicotinate-nucleotide--dimethylbenzimidazole phosphoribosyltransferase.